We begin with the raw amino-acid sequence, 248 residues long: Proteasome subunit alpha type-1 (248 aa).

The protein belongs to the peptidase T1A family. In terms of assembly, the 26S proteasome consists of a 20S proteasome core and two 19S regulatory subunits. The 20S proteasome core is composed of 28 subunits that are arranged in four stacked rings, resulting in a barrel-shaped structure. The two end rings are each formed by seven alpha subunits, and the two central rings are each formed by seven beta subunits. The catalytic chamber with the active sites is on the inside of the barrel.

It is found in the cytoplasm. It localises to the nucleus. Functionally, the proteasome is a multicatalytic proteinase complex which is characterized by its ability to cleave peptides with Arg, Phe, Tyr, Leu, and Glu adjacent to the leaving group at neutral or slightly basic pH. The proteasome has an ATP-dependent proteolytic activity. In Dictyostelium discoideum (Social amoeba), this protein is Proteasome subunit alpha type-1 (psmA1).